A 186-amino-acid chain; its full sequence is UPF0301 protein NTHI0415 (186 aa).

Belongs to the UPF0301 (AlgH) family.

This is UPF0301 protein NTHI0415 from Haemophilus influenzae (strain 86-028NP).